We begin with the raw amino-acid sequence, 365 residues long: Putative nudix hydrolase 1 (365 aa).

The region spanning 72-201 (VNYVAAAIIL…DFIRLVDEAV (130 aa)) is the Nudix hydrolase domain. The Nudix box signature appears at 109–130 (GRVEAGETIEEAVVREVKEETG). Mg(2+)-binding residues include Glu-124 and Glu-128.

It belongs to the Nudix hydrolase family. It depends on Mg(2+) as a cofactor. Requires Mn(2+) as cofactor.

Its function is as follows. Probably mediates the hydrolysis of some nucleoside diphosphate derivatives. The chain is Putative nudix hydrolase 1 (ndx-1) from Caenorhabditis elegans.